The primary structure comprises 396 residues: Lipid-A-disaccharide synthase (396 aa).

This sequence belongs to the LpxB family.

The enzyme catalyses a lipid X + a UDP-2-N,3-O-bis[(3R)-3-hydroxyacyl]-alpha-D-glucosamine = a lipid A disaccharide + UDP + H(+). Its pathway is bacterial outer membrane biogenesis; LPS lipid A biosynthesis. Condensation of UDP-2,3-diacylglucosamine and 2,3-diacylglucosamine-1-phosphate to form lipid A disaccharide, a precursor of lipid A, a phosphorylated glycolipid that anchors the lipopolysaccharide to the outer membrane of the cell. This chain is Lipid-A-disaccharide synthase, found in Acinetobacter baylyi (strain ATCC 33305 / BD413 / ADP1).